The following is a 293-amino-acid chain: Signal recognition particle receptor FtsY (293 aa).

Residues 93-100, 175-179, and 239-242 contribute to the GTP site; these read GVNGAGKT, DTAGR, and TKLD.

This sequence belongs to the GTP-binding SRP family. FtsY subfamily. As to quaternary structure, part of the signal recognition particle protein translocation system, which is composed of SRP and FtsY. SRP is a ribonucleoprotein composed of Ffh and a 4.5S RNA molecule.

The protein localises to the cell inner membrane. It is found in the cytoplasm. It carries out the reaction GTP + H2O = GDP + phosphate + H(+). Functionally, involved in targeting and insertion of nascent membrane proteins into the cytoplasmic membrane. Acts as a receptor for the complex formed by the signal recognition particle (SRP) and the ribosome-nascent chain (RNC). Interaction with SRP-RNC leads to the transfer of the RNC complex to the Sec translocase for insertion into the membrane, the hydrolysis of GTP by both Ffh and FtsY, and the dissociation of the SRP-FtsY complex into the individual components. The chain is Signal recognition particle receptor FtsY from Helicobacter pylori (strain ATCC 700392 / 26695) (Campylobacter pylori).